A 373-amino-acid chain; its full sequence is Anhydro-N-acetylmuramic acid kinase (373 aa).

ATP is bound at residue 13–20; the sequence is GTSMDGID.

It belongs to the anhydro-N-acetylmuramic acid kinase family.

It catalyses the reaction 1,6-anhydro-N-acetyl-beta-muramate + ATP + H2O = N-acetyl-D-muramate 6-phosphate + ADP + H(+). Its pathway is amino-sugar metabolism; 1,6-anhydro-N-acetylmuramate degradation. It participates in cell wall biogenesis; peptidoglycan recycling. In terms of biological role, catalyzes the specific phosphorylation of 1,6-anhydro-N-acetylmuramic acid (anhMurNAc) with the simultaneous cleavage of the 1,6-anhydro ring, generating MurNAc-6-P. Is required for the utilization of anhMurNAc either imported from the medium or derived from its own cell wall murein, and thus plays a role in cell wall recycling. The protein is Anhydro-N-acetylmuramic acid kinase of Brucella suis (strain ATCC 23445 / NCTC 10510).